We begin with the raw amino-acid sequence, 307 residues long: Aspartate carbamoyltransferase catalytic subunit (307 aa).

2 residues coordinate carbamoyl phosphate: Arg-51 and Thr-52. Lys-80 contacts L-aspartate. Residues Arg-101, His-129, and Gln-132 each contribute to the carbamoyl phosphate site. Arg-162 and Arg-225 together coordinate L-aspartate. Carbamoyl phosphate-binding residues include Leu-264 and Pro-265.

Belongs to the aspartate/ornithine carbamoyltransferase superfamily. ATCase family. As to quaternary structure, heterododecamer (2C3:3R2) of six catalytic PyrB chains organized as two trimers (C3), and six regulatory PyrI chains organized as three dimers (R2).

The catalysed reaction is carbamoyl phosphate + L-aspartate = N-carbamoyl-L-aspartate + phosphate + H(+). It participates in pyrimidine metabolism; UMP biosynthesis via de novo pathway; (S)-dihydroorotate from bicarbonate: step 2/3. Catalyzes the condensation of carbamoyl phosphate and aspartate to form carbamoyl aspartate and inorganic phosphate, the committed step in the de novo pyrimidine nucleotide biosynthesis pathway. The protein is Aspartate carbamoyltransferase catalytic subunit of Lachnoclostridium phytofermentans (strain ATCC 700394 / DSM 18823 / ISDg) (Clostridium phytofermentans).